The primary structure comprises 72 residues: Penaeidin-2d (72 aa).

A signal peptide spans 1 to 21 (MRLVVCLVFLASFALVCQGGA). Glutamine 22 carries the post-translational modification Pyrrolidone carboxylic acid. 3 cysteine pairs are disulfide-bonded: cysteine 45/cysteine 59, cysteine 48/cysteine 66, and cysteine 60/cysteine 67. Lysine 71 is modified (lysine amide).

This sequence belongs to the penaeidin family.

Its subcellular location is the cytoplasmic granule. Its function is as follows. Antibacterial and antifungal activity. Presents chitin-binding activity. The polypeptide is Penaeidin-2d (Penaeus setiferus (Atlantic white shrimp)).